Here is a 227-residue protein sequence, read N- to C-terminus: Large ribosomal subunit protein bL25 (227 aa).

Belongs to the bacterial ribosomal protein bL25 family. CTC subfamily. As to quaternary structure, part of the 50S ribosomal subunit; part of the 5S rRNA/L5/L18/L25 subcomplex. Contacts the 5S rRNA. Binds to the 5S rRNA independently of L5 and L18.

In terms of biological role, this is one of the proteins that binds to the 5S RNA in the ribosome where it forms part of the central protuberance. The sequence is that of Large ribosomal subunit protein bL25 from Polaromonas sp. (strain JS666 / ATCC BAA-500).